The sequence spans 319 residues: Beta-ketoacyl-[acyl-carrier-protein] synthase III (319 aa).

Active-site residues include Cys-113 and His-246. The ACP-binding stretch occupies residues 247–251 (QANIR). Asn-276 is an active-site residue.

It belongs to the thiolase-like superfamily. FabH family. Homodimer.

It localises to the cytoplasm. It catalyses the reaction malonyl-[ACP] + acetyl-CoA + H(+) = 3-oxobutanoyl-[ACP] + CO2 + CoA. It participates in lipid metabolism; fatty acid biosynthesis. In terms of biological role, catalyzes the condensation reaction of fatty acid synthesis by the addition to an acyl acceptor of two carbons from malonyl-ACP. Catalyzes the first condensation reaction which initiates fatty acid synthesis and may therefore play a role in governing the total rate of fatty acid production. Possesses both acetoacetyl-ACP synthase and acetyl transacylase activities. Its substrate specificity determines the biosynthesis of branched-chain and/or straight-chain of fatty acids. This Ehrlichia ruminantium (strain Gardel) protein is Beta-ketoacyl-[acyl-carrier-protein] synthase III.